Consider the following 75-residue polypeptide: Large ribosomal subunit protein bL31 (75 aa).

It belongs to the bacterial ribosomal protein bL31 family. Type A subfamily. In terms of assembly, part of the 50S ribosomal subunit.

Binds the 23S rRNA. The sequence is that of Large ribosomal subunit protein bL31 from Chlorobaculum tepidum (strain ATCC 49652 / DSM 12025 / NBRC 103806 / TLS) (Chlorobium tepidum).